The chain runs to 166 residues: Disulfide bond formation protein B (166 aa).

Residues 1 to 10 are Cytoplasmic-facing; that stretch reads MGLNITNRQG. The chain crosses the membrane as a helical span at residues 11-27; that stretch reads FLLVAAACAGAIGFALF. The Periplasmic portion of the chain corresponds to 28-45; the sequence is AQYQLGEEPCPLCILQRI. Cys37 and Cys40 are disulfide-bonded. Residues 46–62 form a helical membrane-spanning segment; the sequence is GVMAVGALALLAALHNP. Over 63-69 the chain is Cytoplasmic; that stretch reads GKTGAKV. Residues 70-86 traverse the membrane as a helical segment; sequence WGGLMTLAALSGAGVSL. Residues 87–143 are Periplasmic-facing; it reads RQLWLQSLPADQVPQCGPGLEFLMESFPLWEVLSKVLKGSGECAAIQGRFLGMTMPF. An intrachain disulfide couples Cys102 to Cys129. A helical transmembrane segment spans residues 144–162; it reads WVAVFFAGVIVWTLWLVGR. Over 163–166 the chain is Cytoplasmic; it reads RRRG.

The protein belongs to the DsbB family.

It localises to the cell inner membrane. In terms of biological role, required for disulfide bond formation in some periplasmic proteins. Acts by oxidizing the DsbA protein. The polypeptide is Disulfide bond formation protein B (Chromobacterium violaceum (strain ATCC 12472 / DSM 30191 / JCM 1249 / CCUG 213 / NBRC 12614 / NCIMB 9131 / NCTC 9757 / MK)).